The primary structure comprises 374 residues: Acetylxylan esterase (374 aa).

An N-terminal signal peptide occupies residues 1–22; that stretch reads MVFSPRLSAFVALVALTNAATA. The CBM1 domain maps to 23–57; the sequence is VPMYGQCGGSGYTGPTQCDPGLVCVKLNDWYSQCQ. The segment at 58–99 is ser/Thr/Pro-rich linker; that stretch reads SGGAQPPVTTTSSPPVTVSPPPSTTTVAPPVATGPPAPEIPA. The interval 60–86 is disordered; sequence GAQPPVTTTSSPPVTVSPPPSTTTVAP. Low complexity predominate over residues 63 to 73; the sequence is PPVTTTSSPPV. The segment at 100–374 is catalytic; sequence GQLTQLRSFG…EVVAMDFFGL (275 aa). A glycan (N-linked (GlcNAc...) asparagine) is linked at Asn114. Catalysis depends on Ser219, which acts as the Charge relay system. N-linked (GlcNAc...) asparagine glycosylation is present at Asn320.

Belongs to the carbohydrate esterase 1 (CE1) family. AxeA subfamily. As to quaternary structure, monomer. Post-translationally, glycosylated.

Its subcellular location is the secreted. It catalyses the reaction Deacetylation of xylans and xylo-oligosaccharides.. It functions in the pathway glycan degradation; xylan degradation. In terms of biological role, acetylxylan esterase involved in the hydrolysis of xylan, a major structural heterogeneous polysaccharide found in plant biomass representing the second most abundant polysaccharide in the biosphere, after cellulose. Degrades acetylated xylans by cleaving acetyl side groups from the hetero-xylan backbone. The sequence is that of Acetylxylan esterase from Coprinopsis cinerea (strain Okayama-7 / 130 / ATCC MYA-4618 / FGSC 9003) (Inky cap fungus).